The sequence spans 793 residues: Phenylalanine--tRNA ligase beta subunit (793 aa).

Positions 39–148 (AKPFTGVVVG…EDAPVGLNIR (110 aa)) constitute a tRNA-binding domain. The region spanning 400–476 (PKREAIELNQ…RIHGYDNIQI (77 aa)) is the B5 domain. Residues Asp-454, Asp-460, Glu-463, and Glu-464 each coordinate Mg(2+). Positions 698–791 (SRFPSVRRDI…LENTYQATLR (94 aa)) constitute an FDX-ACB domain.

The protein belongs to the phenylalanyl-tRNA synthetase beta subunit family. Type 1 subfamily. Tetramer of two alpha and two beta subunits. It depends on Mg(2+) as a cofactor.

It localises to the cytoplasm. It carries out the reaction tRNA(Phe) + L-phenylalanine + ATP = L-phenylalanyl-tRNA(Phe) + AMP + diphosphate + H(+). This Acinetobacter baylyi (strain ATCC 33305 / BD413 / ADP1) protein is Phenylalanine--tRNA ligase beta subunit.